We begin with the raw amino-acid sequence, 489 residues long: Glycogen synthase (489 aa).

Lys-17 is an ADP-alpha-D-glucose binding site.

The protein belongs to the glycosyltransferase 1 family. Bacterial/plant glycogen synthase subfamily.

The catalysed reaction is [(1-&gt;4)-alpha-D-glucosyl](n) + ADP-alpha-D-glucose = [(1-&gt;4)-alpha-D-glucosyl](n+1) + ADP + H(+). It functions in the pathway glycan biosynthesis; glycogen biosynthesis. Functionally, synthesizes alpha-1,4-glucan chains using ADP-glucose. The protein is Glycogen synthase of Nitratidesulfovibrio vulgaris (strain ATCC 29579 / DSM 644 / CCUG 34227 / NCIMB 8303 / VKM B-1760 / Hildenborough) (Desulfovibrio vulgaris).